Consider the following 206-residue polypeptide: Small ribosomal subunit protein uS4 (206 aa).

Positions 28-52 (YLDRRPYAPGQHGQRRGRGRPSDYS) are disordered. The 76-residue stretch at 96–171 (RRLDNVVFRM…QKRRRVSPWI (76 aa)) folds into the S4 RNA-binding domain.

This sequence belongs to the universal ribosomal protein uS4 family. As to quaternary structure, part of the 30S ribosomal subunit. Contacts protein S5. The interaction surface between S4 and S5 is involved in control of translational fidelity.

One of the primary rRNA binding proteins, it binds directly to 16S rRNA where it nucleates assembly of the body of the 30S subunit. Functionally, with S5 and S12 plays an important role in translational accuracy. The chain is Small ribosomal subunit protein uS4 from Deinococcus geothermalis (strain DSM 11300 / CIP 105573 / AG-3a).